A 103-amino-acid chain; its full sequence is Large ribosomal subunit protein bL25 (103 aa).

This sequence belongs to the bacterial ribosomal protein bL25 family. Part of the 50S ribosomal subunit; part of the 5S rRNA/L5/L18/L25 subcomplex. Contacts the 5S rRNA. Binds to the 5S rRNA independently of L5 and L18.

Its function is as follows. This is one of the proteins that binds to the 5S RNA in the ribosome where it forms part of the central protuberance. This is Large ribosomal subunit protein bL25 from Blochmanniella floridana.